Here is a 115-residue protein sequence, read N- to C-terminus: Allergen Tha p 2 (115 aa).

A signal peptide spans Met1 to Ser15.

The polypeptide is Allergen Tha p 2 (Thaumetopoea pityocampa (Pine processionary moth)).